Reading from the N-terminus, the 436-residue chain is GTPase Obg (436 aa).

Residues 1–159 enclose the Obg domain; that stretch reads MAFVDQATIE…LKVKLELRVL (159 aa). Positions 160–335 constitute an OBG-type G domain; the sequence is ADVGLVGFPS…LLLKVADLLD (176 aa). Residues 166-173, 191-195, 213-216, 285-288, and 316-318 each bind GTP; these read GFPSAGKS, FTTID, DLPG, TKMD, and SSV. Residues S173 and T193 each coordinate Mg(2+). An OCT domain is found at 357 to 436; the sequence is KDDHQSTDFQ…GADFAFEFEE (80 aa).

The protein belongs to the TRAFAC class OBG-HflX-like GTPase superfamily. OBG GTPase family. In terms of assembly, monomer. Mg(2+) serves as cofactor.

It is found in the cytoplasm. Its function is as follows. An essential GTPase which binds GTP, GDP and possibly (p)ppGpp with moderate affinity, with high nucleotide exchange rates and a fairly low GTP hydrolysis rate. Plays a role in control of the cell cycle, stress response, ribosome biogenesis and in those bacteria that undergo differentiation, in morphogenesis control. This chain is GTPase Obg, found in Oenococcus oeni (strain ATCC BAA-331 / PSU-1).